The sequence spans 1274 residues: Myosin-1 (1274 aa).

Residues M1–K28 are disordered. Positions A41–D721 constitute a Myosin motor domain. G134–T141 is an ATP binding site. Residue S363 is modified to Phosphoserine. Residues V410–A492 form an actin-binding region. IQ domains lie at H725–A745 and A746–Q771. The TH1 domain maps to R779 to P969. 3 disordered regions span residues R951–T1029, A1042–F1071, and P1116–Q1248. The segment covering K957 to N974 has biased composition (polar residues). Residues A1042–A1053 show a composition bias toward low complexity. Pro residues-rich tracts occupy residues A1054–P1067 and A1126–R1138. Residues P1067–Q1125 enclose the SH3 domain. 2 stretches are compositionally biased toward low complexity: residues P1139–T1157 and A1170–K1226.

The protein belongs to the TRAFAC class myosin-kinesin ATPase superfamily. Myosin family. Post-translationally, phosphorylation of the TEDS site (Ser-363) is required for the polarization of the actin cytoskeleton. Phosphorylation probably activates the myosin-I ATPase activity.

Its subcellular location is the cytoplasm. The protein localises to the cytoskeleton. The protein resides in the actin patch. Functionally, type-I myosin implicated in the organization of the actin cytoskeleton. Required for proper actin cytoskeleton polarization. At the cell cortex, assembles in patch-like structures together with proteins from the actin-polymerizing machinery and promotes actin assembly. Functions as actin nucleation-promoting factor (NPF) for the Arp2/3 complex. The protein is Myosin-1 (MYO1) of Cryptococcus neoformans var. neoformans serotype D (strain B-3501A) (Filobasidiella neoformans).